We begin with the raw amino-acid sequence, 186 residues long: ATP synthase subunit delta (186 aa).

It belongs to the ATPase delta chain family. In terms of assembly, F-type ATPases have 2 components, F(1) - the catalytic core - and F(0) - the membrane proton channel. F(1) has five subunits: alpha(3), beta(3), gamma(1), delta(1), epsilon(1). F(0) has three main subunits: a(1), b(2) and c(10-14). The alpha and beta chains form an alternating ring which encloses part of the gamma chain. F(1) is attached to F(0) by a central stalk formed by the gamma and epsilon chains, while a peripheral stalk is formed by the delta and b chains.

The protein resides in the cell inner membrane. F(1)F(0) ATP synthase produces ATP from ADP in the presence of a proton or sodium gradient. F-type ATPases consist of two structural domains, F(1) containing the extramembraneous catalytic core and F(0) containing the membrane proton channel, linked together by a central stalk and a peripheral stalk. During catalysis, ATP synthesis in the catalytic domain of F(1) is coupled via a rotary mechanism of the central stalk subunits to proton translocation. Its function is as follows. This protein is part of the stalk that links CF(0) to CF(1). It either transmits conformational changes from CF(0) to CF(1) or is implicated in proton conduction. In Fuscovulum blasticum (Rhodobacter blasticus), this protein is ATP synthase subunit delta.